Reading from the N-terminus, the 102-residue chain is Large ribosomal subunit protein bL21 (102 aa).

This sequence belongs to the bacterial ribosomal protein bL21 family. Part of the 50S ribosomal subunit. Contacts protein L20.

This protein binds to 23S rRNA in the presence of protein L20. This Limosilactobacillus fermentum (strain NBRC 3956 / LMG 18251) (Lactobacillus fermentum) protein is Large ribosomal subunit protein bL21.